The primary structure comprises 377 residues: Lipoyl synthase, mitochondrial (377 aa).

A mitochondrion-targeting transit peptide spans 1–77 (MFRRGGRILN…LPNGSVHKRL (77 aa)). Positions 107, 112, 118, 138, 142, 145, and 353 each coordinate [4Fe-4S] cluster. One can recognise a Radical SAM core domain in the interval 123–342 (DKTRATATIM…RKRAEELGFL (220 aa)).

Belongs to the radical SAM superfamily. Lipoyl synthase family. Requires [4Fe-4S] cluster as cofactor.

The protein localises to the mitochondrion. The catalysed reaction is [[Fe-S] cluster scaffold protein carrying a second [4Fe-4S](2+) cluster] + N(6)-octanoyl-L-lysyl-[protein] + 2 oxidized [2Fe-2S]-[ferredoxin] + 2 S-adenosyl-L-methionine + 4 H(+) = [[Fe-S] cluster scaffold protein] + N(6)-[(R)-dihydrolipoyl]-L-lysyl-[protein] + 4 Fe(3+) + 2 hydrogen sulfide + 2 5'-deoxyadenosine + 2 L-methionine + 2 reduced [2Fe-2S]-[ferredoxin]. The protein operates within protein modification; protein lipoylation via endogenous pathway; protein N(6)-(lipoyl)lysine from octanoyl-[acyl-carrier-protein]: step 2/2. In terms of biological role, catalyzes the radical-mediated insertion of two sulfur atoms into the C-6 and C-8 positions of the octanoyl moiety bound to the lipoyl domains of lipoate-dependent enzymes, thereby converting the octanoylated domains into lipoylated derivatives. The polypeptide is Lipoyl synthase, mitochondrial (Schizosaccharomyces japonicus (strain yFS275 / FY16936) (Fission yeast)).